The following is a 227-amino-acid chain: Glutathione S-transferase U7 (227 aa).

Residues Glu8–Pro87 enclose the GST N-terminal domain. Residues Ser18 to Pro19, Asn44 to Lys45, Met58 to Ile59, and Glu71 to Ser72 contribute to the glutathione site. Residues Asp92 to Ile215 form the GST C-terminal domain.

Belongs to the GST superfamily. Tau family.

It localises to the cytoplasm. The protein resides in the cytosol. The catalysed reaction is RX + glutathione = an S-substituted glutathione + a halide anion + H(+). Its function is as follows. May be involved in the conjugation of reduced glutathione to a wide number of exogenous and endogenous hydrophobic electrophiles and have a detoxification role against certain herbicides. This is Glutathione S-transferase U7 (GSTU7) from Arabidopsis thaliana (Mouse-ear cress).